Consider the following 198-residue polypeptide: HTH-type transcriptional regulator BetI (198 aa).

Residues 8–68 (KIRRPQLVSA…ETMRDILRQL (61 aa)) form the HTH tetR-type domain. Positions 31–50 (SVSLISQEAGVSSGIINHYF) form a DNA-binding region, H-T-H motif.

Its pathway is amine and polyamine biosynthesis; betaine biosynthesis via choline pathway [regulation]. Its function is as follows. Repressor involved in the biosynthesis of the osmoprotectant glycine betaine. It represses transcription of the choline transporter BetT and the genes of BetAB involved in the synthesis of glycine betaine. This chain is HTH-type transcriptional regulator BetI, found in Vibrio vulnificus (strain YJ016).